We begin with the raw amino-acid sequence, 65 residues long: VRDGYIADDKDCAYFCGRNAYCDEECKKGAESGKCWYAGQYGNACWCYKLPDWVPIKQKVSGKCN.

The LCN-type CS-alpha/beta domain occupies 2-65; sequence RDGYIADDKD…IKQKVSGKCN (64 aa). Cystine bridges form between Cys12–Cys64, Cys16–Cys35, Cys22–Cys45, and Cys26–Cys47.

The protein belongs to the long (4 C-C) scorpion toxin superfamily. Sodium channel inhibitor family. Alpha subfamily. As to expression, expressed by the venom gland.

The protein localises to the secreted. Its function is as follows. Alpha toxins bind voltage-independently at site-3 of sodium channels (Nav) and inhibit the inactivation of the activated channels, thereby blocking neuronal transmission. Has paralytic activity in mice. In Mesobuthus eupeus (Lesser Asian scorpion), this protein is Alpha-toxin BeM10.